A 1708-amino-acid chain; its full sequence is Rapamycin-insensitive companion of mTOR (1708 aa).

The tract at residues 1–789 (MAAIGRGRSL…DKANLHALIQ (789 aa)) is interaction with NBN. A phosphoserine mark is found at serine 21, serine 35, and serine 265. Lysine 274 participates in a covalent cross-link: Glycyl lysine isopeptide (Lys-Gly) (interchain with G-Cter in ubiquitin). Positions 521-570 (LKDTEEALLINLRDSQVLQHKENLDWDWNLIGTILKWPNVNLRNYKDEQL) are ribosome-binding domain. The ATP site is built by asparagine 543, arginine 572, and arginine 576. A compositionally biased stretch (low complexity) spans 1021–1043 (TLSLNSESTSSRHNSESESAPSS). The interval 1021-1045 (TLSLNSESTSSRHNSESESAPSSMF) is disordered. Residues lysine 1092 and lysine 1095 each carry the N6-acetyllysine modification. 2 disordered regions span residues 1101-1198 (SLTL…ENTS) and 1218-1247 (SFNTDTTTSGISSMSSSPSRETVAVDPTAM). Threonine 1103 is modified (phosphothreonine). An N6-acetyllysine mark is found at lysine 1116, lysine 1119, and lysine 1125. A Phosphothreonine; by RPS6KB1 modification is found at threonine 1135. At serine 1138 the chain carries Phosphoserine. The span at 1147–1158 (FTSSSAQKSLQL) shows a compositional bias: polar residues. Residues serine 1161, serine 1218, and serine 1234 each carry the phosphoserine modification. The segment covering 1221–1239 (TDTTTSGISSMSSSPSRET) has biased composition (low complexity). Threonine 1270 bears the Phosphothreonine mark. A phosphoserine mark is found at serine 1273, serine 1277, serine 1281, and serine 1283. Threonine 1294 carries the post-translational modification Phosphothreonine. Serine 1301 and serine 1312 each carry phosphoserine. Phosphothreonine is present on threonine 1331. Phosphoserine is present on residues serine 1345 and serine 1352. Position 1375 is a phosphothreonine (threonine 1375). Serine 1384 is subject to Phosphoserine. At tyrosine 1385 the chain carries Phosphotyrosine. 3 positions are modified to phosphoserine: serine 1387, serine 1395, and serine 1410. Residues histidine 1514, cysteine 1519, and cysteine 1522 each contribute to the Zn(2+) site. Phosphoserine occurs at positions 1570, 1573, 1576, and 1591. Residue cysteine 1651 coordinates Zn(2+).

This sequence belongs to the RICTOR family. Component of the mechanistic target of rapamycin complex 2 (mTORC2), consisting in two heterotretramers composed of MTOR, MLST8, RICTOR and MAPKAP1/SIN1. The mTORC2 core complex associates with PRR5/PROTOR1 and/or PRR5L/PROTOR2. Contrary to mTORC1, mTORC2 does not bind to and is not sensitive to FKBP12-rapamycin. Binds directly to MTOR and PRR5 within the TORC2 complex; interaction with MTOR is enhanced by deubiquitination of RICTOR by USP9X. Interaction with MAPKAP1 is not enhanced by RICTOR deubiquitination by USP9X. Interacts with CCDC28B. Interacts with NBN. Interacts with SIK3. Interacts with NCKAP1L. Interacts with ARMH4 (via cytoplasmic tail); this interaction bridges ARMH4 to the mTORC2 complex and inhibits the mTORC2 kinase activity. Interacts with UBXN2A. Interacts with TSPAN8. Phosphorylated by MTOR; when part of mTORC2. Phosphorylated at Thr-1135 by RPS6KB1 downstream of the mTORC1 complex: phosphorylation of RICTOR inhibits mTORC2 signaling by creating a binding site for 14-3-3 proteins. Phosphorylated at Ser-1234 by GSK3B in response to endoplasmic stress, inhibiting mTORC2 signaling. Post-translationally, ubiquitinated by the SCF(FBXW7) complex, leading to its degradation by the proteasome. Deubiquitinated by USP9X; deubiquitination stabilizes RICTOR and enhances its binding to MTOR, thus promoting mTORC2 complex assembly. In terms of processing, acetylated by EP300/p300 in response to glucose, leading to activate the mTORC2 complex. Acetylation by BLOC1S1/GCN5L1 in response to hypotoxic stress protects RICTOR against ubiquitination and subsequent degradation by the proteasome. Highest levels in liver and brain with expression also detected in heart, muscle, spleen and kidney (at protein level).

Its subcellular location is the cell membrane. It localises to the endoplasmic reticulum membrane. The protein localises to the lysosome membrane. In terms of biological role, component of the mechanistic target of rapamycin complex 2 (mTORC2), which transduces signals from growth factors to pathways involved in proliferation, cytoskeletal organization, lipogenesis and anabolic output. In response to growth factors, mTORC2 phosphorylates and activates AGC protein kinase family members, including AKT (AKT1, AKT2 and AKT3), PKC (PRKCA, PRKCB and PRKCE) and SGK1. In contrast to mTORC1, mTORC2 is nutrient-insensitive. Within the mTORC2 complex, RICTOR probably acts as a molecular adapter. RICTOR is responsible for the FKBP12-rapamycin-insensitivity of mTORC2. mTORC2 plays a critical role in AKT1 activation by mediating phosphorylation of different sites depending on the context, such as 'Thr-450', 'Ser-473', 'Ser-477' or 'Thr-479', facilitating the phosphorylation of the activation loop of AKT1 on 'Thr-308' by PDPK1/PDK1 which is a prerequisite for full activation. mTORC2 catalyzes the phosphorylation of SGK1 at 'Ser-422' and of PRKCA on 'Ser-657'. The mTORC2 complex also phosphorylates various proteins involved in insulin signaling, such as FBXW8 and IGF2BP1. mTORC2 acts upstream of Rho GTPases to regulate the actin cytoskeleton, probably by activating one or more Rho-type guanine nucleotide exchange factors. mTORC2 promotes the serum-induced formation of stress-fibers or F-actin. Plays an essential role in embryonic growth and development. The sequence is that of Rapamycin-insensitive companion of mTOR from Mus musculus (Mouse).